The chain runs to 254 residues: Phosphoribosylaminoimidazole-succinocarboxamide synthase (254 aa).

This sequence belongs to the SAICAR synthetase family.

It carries out the reaction 5-amino-1-(5-phospho-D-ribosyl)imidazole-4-carboxylate + L-aspartate + ATP = (2S)-2-[5-amino-1-(5-phospho-beta-D-ribosyl)imidazole-4-carboxamido]succinate + ADP + phosphate + 2 H(+). It participates in purine metabolism; IMP biosynthesis via de novo pathway; 5-amino-1-(5-phospho-D-ribosyl)imidazole-4-carboxamide from 5-amino-1-(5-phospho-D-ribosyl)imidazole-4-carboxylate: step 1/2. This is Phosphoribosylaminoimidazole-succinocarboxamide synthase from Bartonella henselae (strain ATCC 49882 / DSM 28221 / CCUG 30454 / Houston 1) (Rochalimaea henselae).